Consider the following 107-residue polypeptide: U1-lycotoxin-Ls1q (107 aa).

An N-terminal signal peptide occupies residues 1–20 (MMKVLVVVALLVTLISYSSS). Positions 21–41 (EGIDDLEADELLSLMANEQTR) are excised as a propeptide. Intrachain disulfides connect Cys-44–Cys-59, Cys-51–Cys-68, Cys-58–Cys-86, and Cys-70–Cys-84.

Belongs to the neurotoxin 19 (CSTX) family. 04 (U1-Lctx) subfamily. As to expression, expressed by the venom gland.

Its subcellular location is the secreted. The chain is U1-lycotoxin-Ls1q from Lycosa singoriensis (Wolf spider).